A 108-amino-acid chain; its full sequence is Protein RnfH (108 aa).

It belongs to the UPF0125 (RnfH) family.

The protein is Protein RnfH of Laribacter hongkongensis (strain HLHK9).